A 447-amino-acid chain; its full sequence is MQHFEVNYDGLVGPTHNYAGLSFGNVASLANAKATSSPKHAALQGLKKMKALHDMGMKQGVLAPQERPDIFALRRLGFHGTDSEVLYRAATEAPAIFQAVCSASSMWTANAATVSPSADTANGKVHFTPANLTNKFHRSLEPQTSGRILQAMFNNGRYFEHHTHLPDNEHFGDEGAANHTRLCREYGHAGIELFVFGRYAFDSSKPAPKRFPARQTLEASQAIARLHGLSEDNTVYIQQNPDVIDQGVFHNDVIAVGNQNVLFYHEQAFTDTESKLAEIQRKFGEHPLHFIKVATEQVSIQDAVNTYLFNTQLITPPDGQMTIIAPTECQENDNVRSYLEQLTQSADSPIKRVEYFDVKQSMRNGGGPACLRLRVALNDEEIAGANQNCLMSDGLFNRLNQWVEKHYRDELAVDDLRDPALLEESRTALDELTQIMKLGSVYPFQQD.

Substrate contacts are provided by residues 19 to 28 (AGLSFGNVAS), Asn110, and 137 to 138 (HR). The active site involves Glu174. Arg214 contributes to the substrate binding site. His250 is an active-site residue. Residues Asp252 and Asn364 each contribute to the substrate site. Residue Cys370 is the Nucleophile of the active site.

This sequence belongs to the succinylarginine dihydrolase family. In terms of assembly, homodimer.

It catalyses the reaction N(2)-succinyl-L-arginine + 2 H2O + 2 H(+) = N(2)-succinyl-L-ornithine + 2 NH4(+) + CO2. It functions in the pathway amino-acid degradation; L-arginine degradation via AST pathway; L-glutamate and succinate from L-arginine: step 2/5. Functionally, catalyzes the hydrolysis of N(2)-succinylarginine into N(2)-succinylornithine, ammonia and CO(2). The sequence is that of N-succinylarginine dihydrolase from Idiomarina loihiensis (strain ATCC BAA-735 / DSM 15497 / L2-TR).